Reading from the N-terminus, the 1235-residue chain is UPF0507 protein DEHA2G04334g (1235 aa).

Residues 323 to 487 enclose the VPS9 domain; that stretch reads QNDDSDAIKI…LSSSMNDEPQ (165 aa). A disordered region spans residues 1097 to 1124; it reads STTEADTTDTTDATDATHASPNLANSTN. Low complexity predominate over residues 1100–1115; it reads EADTTDTTDATDATHA.

It belongs to the UPF0507 family.

The polypeptide is UPF0507 protein DEHA2G04334g (Debaryomyces hansenii (strain ATCC 36239 / CBS 767 / BCRC 21394 / JCM 1990 / NBRC 0083 / IGC 2968) (Yeast)).